Reading from the N-terminus, the 266-residue chain is Glutamate racemase (266 aa).

Substrate contacts are provided by residues 9-10 and 41-42; these read DS and YG. Cys72 acts as the Proton donor/acceptor in catalysis. 73–74 contributes to the substrate binding site; sequence NT. Cys184 acts as the Proton donor/acceptor in catalysis. 185–186 lines the substrate pocket; sequence TH.

This sequence belongs to the aspartate/glutamate racemases family. As to quaternary structure, homodimer.

The enzyme catalyses L-glutamate = D-glutamate. It participates in cell wall biogenesis; peptidoglycan biosynthesis. Its function is as follows. Provides the (R)-glutamate required for cell wall biosynthesis. The polypeptide is Glutamate racemase (Staphylococcus aureus (strain MRSA252)).